The following is a 485-amino-acid chain: Glutamyl-tRNA(Gln) amidotransferase subunit A (485 aa).

Residues K82 and S157 each act as charge relay system in the active site. S181 serves as the catalytic Acyl-ester intermediate.

Belongs to the amidase family. GatA subfamily. In terms of assembly, heterotrimer of A, B and C subunits.

The enzyme catalyses L-glutamyl-tRNA(Gln) + L-glutamine + ATP + H2O = L-glutaminyl-tRNA(Gln) + L-glutamate + ADP + phosphate + H(+). In terms of biological role, allows the formation of correctly charged Gln-tRNA(Gln) through the transamidation of misacylated Glu-tRNA(Gln) in organisms which lack glutaminyl-tRNA synthetase. The reaction takes place in the presence of glutamine and ATP through an activated gamma-phospho-Glu-tRNA(Gln). This Treponema denticola (strain ATCC 35405 / DSM 14222 / CIP 103919 / JCM 8153 / KCTC 15104) protein is Glutamyl-tRNA(Gln) amidotransferase subunit A.